We begin with the raw amino-acid sequence, 194 residues long: Ion-translocating oxidoreductase complex subunit A (194 aa).

Helical transmembrane passes span 5-25 (VLIL…FLGL), 47-67 (FVLT…LVPF), 72-92 (LRTI…EMFV), 102-122 (VLGV…VALL), 135-155 (LTYG…FAAM), and 172-192 (SIGL…SGLI).

The protein belongs to the NqrDE/RnfAE family. In terms of assembly, the complex is composed of six subunits: RnfA, RnfB, RnfC, RnfD, RnfE and RnfG.

It localises to the cell inner membrane. Functionally, part of a membrane-bound complex that couples electron transfer with translocation of ions across the membrane. This is Ion-translocating oxidoreductase complex subunit A from Alcanivorax borkumensis (strain ATCC 700651 / DSM 11573 / NCIMB 13689 / SK2).